Reading from the N-terminus, the 275-residue chain is Gap junction gamma-3 protein (275 aa).

Residues 1–22 (MCGSFLRRVAAEESRHPTPVGR) lie on the Cytoplasmic side of the membrane. Residues 23-43 (LLLPALLGLRLVLLAAGGTGV) traverse the membrane as a helical segment. Topologically, residues 44-77 (FGGGEEQSEFVCHTQQAGCKAVCYDAFHPLSPLR) are extracellular. A helical membrane pass occupies residues 78 to 98 (FWAFQVTLVAVPSALYMGFIL). The Cytoplasmic portion of the chain corresponds to 99–134 (YHVIWHWEASEKVKTEEETLSQGEKGGEASRAGSSR). Residues 135-155 (LLWAYVAQLGVRLALEGAALG) traverse the membrane as a helical segment. The Extracellular portion of the chain corresponds to 156–196 (GQYHLYGFRMPSSFVCRLEPCLGSTNCYLSRPSEKSIFLKT). Residues 197–217 (MFGVTGLCLLFTLLELVLLGL) traverse the membrane as a helical segment. Residues 218–275 (GRWWRIWRHKSPSSNYSPTSQSAKRCKAPTDNFPVVEIRERPGEAGERGSEVPLSARP) lie on the Cytoplasmic side of the membrane. A compositionally biased stretch (basic and acidic residues) spans 254 to 267 (EIRERPGEAGERGS). Residues 254-275 (EIRERPGEAGERGSEVPLSARP) form a disordered region.

Belongs to the connexin family. Gamma-type subfamily. As to quaternary structure, a connexon is composed of a hexamer of connexins.

The protein localises to the cell membrane. The protein resides in the cell junction. It is found in the gap junction. Its function is as follows. One gap junction consists of a cluster of closely packed pairs of transmembrane channels, the connexons, through which materials of low MW diffuse from one cell to a neighboring cell. In Bos taurus (Bovine), this protein is Gap junction gamma-3 protein (GJC3).